A 350-amino-acid chain; its full sequence is Protein RecA (350 aa).

Residue 68-75 (GPESSGKT) participates in ATP binding.

The protein belongs to the RecA family.

It localises to the cytoplasm. In terms of biological role, can catalyze the hydrolysis of ATP in the presence of single-stranded DNA, the ATP-dependent uptake of single-stranded DNA by duplex DNA, and the ATP-dependent hybridization of homologous single-stranded DNAs. It interacts with LexA causing its activation and leading to its autocatalytic cleavage. This is Protein RecA from Mycolicibacterium gilvum (strain PYR-GCK) (Mycobacterium gilvum (strain PYR-GCK)).